The sequence spans 112 residues: Ciliary microtubule inner protein 3 (112 aa).

Residues 1 to 34 are disordered; sequence MCKDSQKPSVPSHGPKTPSCKGVKAPHSSRPRAW.

It belongs to the CIMIP3-like family.

Its subcellular location is the cytoplasm. It localises to the cytoskeleton. The protein localises to the flagellum axoneme. This chain is Ciliary microtubule inner protein 3, found in Homo sapiens (Human).